Reading from the N-terminus, the 245-residue chain is 5'-nucleotidase SurE (245 aa).

A divalent metal cation is bound by residues D8, D9, S39, and N97.

Belongs to the SurE nucleotidase family. A divalent metal cation serves as cofactor.

The protein localises to the cytoplasm. The enzyme catalyses a ribonucleoside 5'-phosphate + H2O = a ribonucleoside + phosphate. Functionally, nucleotidase that shows phosphatase activity on nucleoside 5'-monophosphates. This is 5'-nucleotidase SurE from Clostridium kluyveri (strain NBRC 12016).